A 160-amino-acid chain; its full sequence is Cyclic pyranopterin monophosphate synthase (160 aa).

Substrate-binding positions include 75–77 and 113–114; these read LCH and ME. The active site involves Asp-128.

It belongs to the MoaC family. Homohexamer; trimer of dimers.

The enzyme catalyses (8S)-3',8-cyclo-7,8-dihydroguanosine 5'-triphosphate = cyclic pyranopterin phosphate + diphosphate. The protein operates within cofactor biosynthesis; molybdopterin biosynthesis. Its function is as follows. Catalyzes the conversion of (8S)-3',8-cyclo-7,8-dihydroguanosine 5'-triphosphate to cyclic pyranopterin monophosphate (cPMP). This Haemophilus influenzae (strain PittEE) protein is Cyclic pyranopterin monophosphate synthase.